Reading from the N-terminus, the 106-residue chain is Immunity protein CdiI (106 aa).

Forms a contact-dependent growth inhibition complex of CdiA-CT-NC101, CdiI-NC101 and EF-Tu; the complex is a dimer of heterotrimers.

In terms of biological role, immunity protein component of a toxin-immunity protein module, which functions as a cellular contact-dependent growth inhibition (CDI) system. CDI modules allow bacteria to communicate with and inhibit the growth of closely related neighboring bacteria in a contact-dependent fashion. Neutralizes the toxic activity of cognate toxin CdiA-NC101 (the C-terminal 154 residue CT fragment). Does not inhibit toxic activity of CdiA from other toxin-immunity modules or strains of E.coli. Mediates dimerization of the ternary CdiA-CT-NC101, CdiI-NC101 and EF-Tu complex; both CdiI molecules contact both EF-Tu molecules. This is Immunity protein CdiI from Escherichia coli (strain NC101).